A 379-amino-acid chain; its full sequence is Transcription factor bHLH122 (379 aa).

Positions 1–17 (MESEFQQHHFLLHDHQH) are enriched in basic and acidic residues. Positions 1-21 (MESEFQQHHFLLHDHQHQRPR) are disordered. S74 carries the phosphoserine modification. 3 disordered regions span residues 79–98 (TFNS…EDED), 133–156 (SVSR…ARHN), and 190–286 (TSNT…MSLP). The span at 84 to 93 (GTEKKPPEVK) shows a compositional bias: basic and acidic residues. A compositionally biased stretch (polar residues) spans 190-200 (TSNTEASSLTP). 2 positions are modified to phosphoserine: S213 and S234. A compositionally biased stretch (polar residues) spans 235-261 (GGFNRSFGNEGSASSKLTALARTQSGG). Over residues 265–274 (YKTKDEDSAS) the composition is skewed to basic and acidic residues. Residues 310-360 (CATHPRSIAERVRRTKISERMRKLQDLVPNMDTQTNTADMLDLAVQYIKDL) form the bHLH domain.

In terms of assembly, homodimer.

The protein localises to the nucleus. This chain is Transcription factor bHLH122 (BHLH122), found in Arabidopsis thaliana (Mouse-ear cress).